Consider the following 420-residue polypeptide: Glucose-1-phosphate adenylyltransferase (420 aa).

Residues Tyr-107, Gly-173, 188-189 (EK), and Ser-206 contribute to the alpha-D-glucose 1-phosphate site.

The protein belongs to the bacterial/plant glucose-1-phosphate adenylyltransferase family. In terms of assembly, homotetramer.

The enzyme catalyses alpha-D-glucose 1-phosphate + ATP + H(+) = ADP-alpha-D-glucose + diphosphate. It functions in the pathway glycan biosynthesis; glycogen biosynthesis. In terms of biological role, involved in the biosynthesis of ADP-glucose, a building block required for the elongation reactions to produce glycogen. Catalyzes the reaction between ATP and alpha-D-glucose 1-phosphate (G1P) to produce pyrophosphate and ADP-Glc. This is Glucose-1-phosphate adenylyltransferase from Shewanella sp. (strain W3-18-1).